A 586-amino-acid chain; its full sequence is DNA-binding protein RFX8 (586 aa).

Residues 22-97 (VIQWLVDNFC…YHYDGICIKK (76 aa)) constitute a DNA-binding region (RFX-type winged-helix).

This sequence belongs to the RFX family.

Its subcellular location is the nucleus. In terms of biological role, may be a transcription factor. The sequence is that of DNA-binding protein RFX8 (RFX8) from Homo sapiens (Human).